Consider the following 501-residue polypeptide: MNGGDDAATSGPPPSLEWRFSQVFGERTAGEEVQEVDIISAIEFDKSGDHLATGDRGGRVVLFERTDTKDHGGSRKDLEQTDYPVRHPEFRYKTEFQSHEPEFDYLKSLEIEEKINKIRWCQPANGALFLLSTNDKTIKYWKVQEKKIKKISEMNIDPSESSNIPPQLVTNGLPADKGHDYLSKDFSFPPGGIPSLRLPVVVTSQETNLVARCRRVYAHAHDYHINSISNSSDGETFISADDLRVNLWNLEISNQSFNIVDVKPTNMEDLTEVITSAEFHPIHCNMLAYSSSKGSIRLIDMRQSALCDSHTKLFEEPEAPGSRSFFTEIIASISDIKFSKDGRYILSRDYMTLKLWDINMDSGPVASYQVHEHLRPRLCDLYENDSIFDKFECCLSGDGLRVATGSYSNLFRVFGASQGSTEAATLEASKNPMRRQIQTPARPSRSIGSMTRVVRRGSESPGTEANGNAYDFTTKLLHMAWHPTENSIACAAANSLYMYYA.

The residue at position 1 (M1) is an N-acetylmethionine. WD repeat units lie at residues 34–73 (QEVDIISAIEFDKSGDHLATGDRGGRVVLFERTDTKDHGG), 110–151 (EIEE…IKKI), 220–258 (AHDYHINSISNSSDGETFISADDLRVNLWNLEISNQSFN), 269–309 (DLTE…LCDS), and 328–366 (EIIASISDIKFSKDGRYILSRDYMTLKLWDINMDSGPVA). Residues 439–449 (TPARPSRSIGS) show a composition bias toward polar residues. Residues 439 to 466 (TPARPSRSIGSMTRVVRRGSESPGTEAN) form a disordered region. The WD 6 repeat unit spans residues 471–501 (DFTTKLLHMAWHPTENSIACAAANSLYMYYA).

The protein belongs to the phosphatase 2A regulatory subunit B family. PP2A consists of a common heteromeric enzyme, composed of a catalytic subunit (subunits C), a constant regulatory subunit (subunit A), and a variety of regulatory subunits such as subunits B (the R2/B/PR55/B55, R3/B''/PR72/PR130/PR59 and R5/B'/B56 families). Interacts with SIC/RON3. Expressed ubiquitously.

In terms of biological role, the B regulatory subunit may modulate substrate selectivity and catalytic activity, and may also direct the localization of the catalytic enzyme to a particular subcellular compartment. This is Serine/threonine protein phosphatase 2A 55 kDa regulatory subunit B beta isoform (PP2AB2) from Arabidopsis thaliana (Mouse-ear cress).